Reading from the N-terminus, the 671-residue chain is Nucleolar GTP-binding protein 1 (671 aa).

An OBG-type G domain is found at 169–350 (RTVLICGYPN…VKNAACERLL (182 aa)). GTP is bound by residues 175–182 (GYPNVGKS), 221–225 (DTPGI), and 289–292 (NKTD). Residues 516-671 (VAQNRSTVPR…KRGKGKTDRR (156 aa)) form a disordered region. Over residues 595–605 (RAMSISRSQSR) the composition is skewed to polar residues. 2 stretches are compositionally biased toward basic residues: residues 631–640 (NKSHKKRDKN) and 654–671 (RPKH…TDRR).

This sequence belongs to the TRAFAC class OBG-HflX-like GTPase superfamily. OBG GTPase family. NOG subfamily.

It localises to the nucleus. It is found in the nucleolus. Its function is as follows. Involved in the biogenesis of the 60S ribosomal subunit. This chain is Nucleolar GTP-binding protein 1, found in Arabidopsis thaliana (Mouse-ear cress).